Consider the following 374-residue polypeptide: Alcohol dehydrogenase 1 (374 aa).

At Ser1 the chain carries N-acetylserine. Zn(2+) is bound by residues Cys46, His67, Cys97, Cys100, Cys103, Cys111, and Cys174. Residues 199-204 (GLGGVG), Asp223, Lys228, 292-294 (VGV), and Arg369 contribute to the NAD(+) site.

It belongs to the zinc-containing alcohol dehydrogenase family. Class-I subfamily. Zn(2+) is required as a cofactor.

It is found in the cytoplasm. It carries out the reaction a primary alcohol + NAD(+) = an aldehyde + NADH + H(+). It catalyses the reaction a secondary alcohol + NAD(+) = a ketone + NADH + H(+). The protein is Alcohol dehydrogenase 1 of Alligator mississippiensis (American alligator).